A 140-amino-acid chain; its full sequence is Large ribosomal subunit protein uL16 (140 aa).

Belongs to the universal ribosomal protein uL16 family. In terms of assembly, part of the 50S ribosomal subunit.

Functionally, binds 23S rRNA and is also seen to make contacts with the A and possibly P site tRNAs. The polypeptide is Large ribosomal subunit protein uL16 (Phytoplasma mali (strain AT)).